An 849-amino-acid polypeptide reads, in one-letter code: Dopamine receptor 2 (849 aa).

The Extracellular portion of the chain corresponds to 1–39 (MEAGETWNVSLEWPPPSLDLSTITQTPSTIVGSGIPLNY). N-linked (GlcNAc...) asparagine glycosylation occurs at Asn8. The helical transmembrane segment at 40 to 60 (AGLSLIVIPLITLLGNLLVII) threads the bilayer. The Cytoplasmic segment spans residues 61-70 (SVLRYRALQS). A helical transmembrane segment spans residues 71–91 (AINFLILGLAVADLLVAIIVM). Topologically, residues 92-112 (PYAVYVYVTNGDWYLGNLMCD) are extracellular. Cysteines 111 and 190 form a disulfide. A helical transmembrane segment spans residues 113–133 (IYMASDVCCSTASILLLAVIS). The Cytoplasmic segment spans residues 134–155 (FDRYRAVSLPIQYSRQSQNVKR). The chain crosses the membrane as a helical span at residues 156–176 (VWTLIAVIWLVSLTLASPMVF). Residues 177–203 (GVNVRPPDANPYECRFYNAEFSILSSM) lie on the Extracellular side of the membrane. A required for the interaction with gpa-14 region spans residues 183 to 849 (PDANPYECRF…HHFSNKQAHV (667 aa)). The helical transmembrane segment at 204–224 (ISFVIPCFLVLFVYIRIIIAL) threads the bilayer. The Cytoplasmic portion of the chain corresponds to 225–759 (KKREKAAKMR…QRKEKRATKT (535 aa)). The segment at 450-515 (RRSSYADDSQ…NNSRTASITN (66 aa)) is disordered. The segment covering 457-470 (DSQPTSSQTSSGDG) has biased composition (low complexity). Residues 477–498 (GQKRFRNLSRNYSTKHHRKVVK) show a composition bias toward basic residues. Residues 501 to 515 (RGNSRNNSRTASITN) are compositionally biased toward polar residues. A helical membrane pass occupies residues 760 to 780 (LGVVVGVFLVCWVPFFVINIL). Residues 781–798 (NAVCILLNKDSCQVGYDL) lie on the Extracellular side of the membrane. The helical transmembrane segment at 799-819 (FFYCTWIGYMNSFMNPIIYTI) threads the bilayer. The Cytoplasmic segment spans residues 820-849 (FNTEFRRAFKSIIFGRNSTRHHFSNKQAHV).

Belongs to the G-protein coupled receptor 1 family. In terms of assembly, interacts (via C-terminus) with the G-alpha protein gpa-14; the interaction is direct. Expressed in all dopaminergic neurons. Expressed in neurons around the nerve ring and the posterior side of the body including PDE neurons. In hermaphrodites, expressed in the head and tail ganglia including in the RIA interneuron pair, and in a subset of sublateral interneurons and the PDA neuron in the tail. Expressed in cholinergic SIA neurons. Also expressed in the male tail. In males, expressed in the dorsal spicule protractor, ventral spicule protractor, dorsal spicule retractor and ventral spicule retractor muscles and the sensory post-cloacal sensilla B (PCB) neuron. In males, expressed in the sensory hook neurons HOA.

The protein localises to the cell membrane. G-protein coupled receptor which binds to the neurotransmitter dopamine with high affinity leading to the activation of an associated G-protein and downstream signaling pathways. Couples to G-proteins to inhibit adenylate cyclase (AC) activity and cAMP production. Inhibits synaptic vesicle fusion to negatively regulate the release of dopamine at dopaminergic neuron synapses. Antagonizes octopamine signaling in response to food by promoting the dopamine-mediated suppression of crh-1/CREB1 transcription factor activation in cholinergic SIA neurons. This is most likely in association with the G(o)-alpha G-protein subunit goa-1. In association with the G-alpha protein gpa-14, modulates two types of learning behavior: touch habituation and chemosensory associative conditioning. May act partly via tsp-17 to negatively regulate dopamine reuptake transporter dat-1 activity. Plays a role in behavioral plasticity and regulates the decision-making process when conflicting alternatives are present. Promotes male mating behavior by antagonizing acetylcholine signaling to control the protrusions of copulatory spicules from the tail of males during hermaphrodite vulval location. Modulates unc-7 activity at gap junctions to promote inhibitory neuronal signaling transduction between chemosensory and mechanosensory neurons, and thus ensures spicule insertion attempts are confined to the hermaphrodite vulva during copulation. In terms of biological role, G-protein coupled receptor which binds to the neurotransmitter dopamine with high affinity leading to the activation of an associated G-protein and downstream signaling pathways. Couples to G-proteins to inhibit adenylate cyclase (AC) activity and cAMP production. This chain is Dopamine receptor 2, found in Caenorhabditis elegans.